The chain runs to 77 residues: Translational regulator CsrA (77 aa).

It belongs to the CsrA/RsmA family. Homodimer; the beta-strands of each monomer intercalate to form a hydrophobic core, while the alpha-helices form wings that extend away from the core.

It is found in the cytoplasm. In terms of biological role, a translational regulator that binds mRNA to regulate translation initiation and/or mRNA stability. Usually binds in the 5'-UTR at or near the Shine-Dalgarno sequence preventing ribosome-binding, thus repressing translation. Its main target seems to be the major flagellin gene, while its function is anatagonized by FliW. The polypeptide is Translational regulator CsrA (Desulfitobacterium hafniense (strain Y51)).